Here is a 718-residue protein sequence, read N- to C-terminus: Protein spire homolog 2 (718 aa).

Disordered regions lie at residues 1–22 (MARA…ARPE) and 143–166 (DSSC…EGGP). Positions 10–21 (AAPERAGGAARP) are enriched in low complexity. Positions 26 to 207 (LSLEEVLKVY…RALFVETLEL (182 aa)) constitute a KIND domain. 3 consecutive WH2 domains span residues 251–265 (QLMR…LKKV), 281–299 (PFEM…LRKV), and 345–362 (LHEK…LRPV). Ser-374 carries the phosphoserine modification. The tract at residues 397–434 (TDTGSGSQRPRPRVLLKAPTLAEMEEMNTSEEEESPCG) is disordered. Positions 419 to 432 (EMEEMNTSEEEESP) are enriched in acidic residues. Phosphoserine occurs at positions 443, 445, and 479. Positions 456–518 (MASGLQSAAQ…SSLSSVDGPE (63 aa)) are disordered. Over residues 496 to 513 (SGQSQPLPSSALPSSLSS) the composition is skewed to low complexity. Residues 538 to 558 (LALTVEEVVDVRRVLVKAEME) form a spir-box region.

It belongs to the spire family. In terms of tissue distribution, detected in oocytes.

Its subcellular location is the cytoplasm. The protein resides in the cytoskeleton. It localises to the cytosol. It is found in the cell membrane. The protein localises to the cytoplasmic vesicle membrane. Acts as an actin nucleation factor, remains associated with the slow-growing pointed end of the new filament. Involved in intracellular vesicle transport along actin fibers, providing a novel link between actin cytoskeleton dynamics and intracellular transport. Required for asymmetric spindle positioning and asymmetric cell division during oocyte meiosis. Required for normal formation of the cleavage furrow and for polar body extrusion during female germ cell meiosis. Also acts in the nucleus: together with SPIRE1 and SPIRE2, promotes assembly of nuclear actin filaments in response to DNA damage in order to facilitate movement of chromatin and repair factors after DNA damage. In Mus musculus (Mouse), this protein is Protein spire homolog 2 (Spire2).